The following is a 423-amino-acid chain: Glucose-1-phosphate adenylyltransferase (423 aa).

Alpha-D-glucose 1-phosphate is bound by residues Tyr112, Gly177, 192–193 (EK), and Ser210.

It belongs to the bacterial/plant glucose-1-phosphate adenylyltransferase family. Homotetramer.

It carries out the reaction alpha-D-glucose 1-phosphate + ATP + H(+) = ADP-alpha-D-glucose + diphosphate. Its pathway is glycan biosynthesis; glycogen biosynthesis. Its function is as follows. Involved in the biosynthesis of ADP-glucose, a building block required for the elongation reactions to produce glycogen. Catalyzes the reaction between ATP and alpha-D-glucose 1-phosphate (G1P) to produce pyrophosphate and ADP-Glc. This Rhodospirillum rubrum (strain ATCC 11170 / ATH 1.1.1 / DSM 467 / LMG 4362 / NCIMB 8255 / S1) protein is Glucose-1-phosphate adenylyltransferase.